Here is a 145-residue protein sequence, read N- to C-terminus: Androgenic gland hormone (145 aa).

The N-terminal stretch at 1–21 is a signal peptide; that stretch reads MKGLLFIVSLLCLTLHQRVWA. Intrachain disulfides connect C33/C122, C42/C59, C44/C140, and C123/C131. A propeptide spans 68–112 (c peptide); sequence SADDEDYLFEEDEDDEFFHPRALSPPAAKSGDERLEDEVSFHSRS. A glycan (N-linked (GlcNAc...) asparagine) is linked at N132.

As to expression, androgenic gland.

The protein resides in the secreted. In terms of biological role, controls sex differentiation and the formation of male appendages, spermatogenesis, pigmentation, and male specific behavior. In Porcellio scaber (Common rough woodlouse), this protein is Androgenic gland hormone (AGH).